A 1697-amino-acid polypeptide reads, in one-letter code: Histone acetyltransferase HAC1 (1697 aa).

A compositionally biased stretch (polar residues) spans 1 to 16; that stretch reads MNVQAHMSGQVSNQGT. Disordered stretches follow at residues 1 to 45, 202 to 221, 385 to 439, 555 to 574, 583 to 631, and 843 to 901; these read MNVQ…LGPS, SNFGLGSGGNMSSMSSQRNT, SFQA…QQQR, HWQSQSQEHTQMSNSMSNER, RMSG…GNRD, and IGIA…GKPE. Low complexity-rich tracts occupy residues 17–28 and 202–217; these read MSQQNGNSQMQN and SNFGLGSGGNMSSMSS. Residues 385 to 398 are compositionally biased toward polar residues; the sequence is SFQAVSRTSSSLSH. Positions 399-439 are enriched in low complexity; that stretch reads QQQQFQQQPNRFQQQPNQFHQQQQQFLHQQQLKQQSQQQQR. 2 stretches are compositionally biased toward polar residues: residues 556 to 571 and 584 to 628; these read WQSQSQEHTQMSNSMS and MSGT…NGNG. The TAZ-type 1 zinc finger occupies 629-709; sequence NRDPRFKNQQ…EPNCPVCIPV (81 aa). Positions 873 to 901 are enriched in basic and acidic residues; sequence TKVEKEPESLKKENLAESTEHTSKSGKPE. Residues 989 to 1066 form a PHD-type zinc finger; the sequence is HYFCIPCYNE…EYTCPYCFIA (78 aa). One can recognise a CBP/p300-type HAT domain in the interval 1081-1517; the sequence is VLGAKDLPRT…VLYHLHNPTA (437 aa). Acetyl-CoA is bound by residues 1204-1206, 1223-1224, and Trp-1279; these read LDS and RT. 2 ZZ-type zinc fingers span residues 1399-1462 and 1519-1572; these read HLQP…IMDI and AFVT…SLAD. Zn(2+) is bound by residues Cys-1404, Cys-1407, Cys-1419, Cys-1422, Cys-1428, Cys-1431, His-1444, His-1452, Cys-1524, Cys-1527, Cys-1539, Cys-1542, Cys-1548, Cys-1551, His-1560, and His-1562. Residues 1579–1662 form a TAZ-type 2 zinc finger; that stretch reads EARQLRVLQL…ECHVPRCRDL (84 aa).

As to expression, rosette leaves, stems and flowers.

The protein resides in the nucleus. The enzyme catalyses L-lysyl-[protein] + acetyl-CoA = N(6)-acetyl-L-lysyl-[protein] + CoA + H(+). Acetyltransferase enzyme. Acetylates histones, giving a specific tag for transcriptional activation. This Arabidopsis thaliana (Mouse-ear cress) protein is Histone acetyltransferase HAC1 (HAC1).